The primary structure comprises 322 residues: Undecaprenyl-phosphate 4-deoxy-4-formamido-L-arabinose transferase (322 aa).

The Cytoplasmic portion of the chain corresponds to Met-1–Met-235. A helical membrane pass occupies residues Leu-236 to Ile-256. Topologically, residues Leu-257–Gly-269 are periplasmic. A helical transmembrane segment spans residues Val-270 to Leu-290. Residues Leu-291 to Glu-322 lie on the Cytoplasmic side of the membrane.

This sequence belongs to the glycosyltransferase 2 family.

It is found in the cell inner membrane. The enzyme catalyses UDP-4-deoxy-4-formamido-beta-L-arabinose + di-trans,octa-cis-undecaprenyl phosphate = 4-deoxy-4-formamido-alpha-L-arabinopyranosyl di-trans,octa-cis-undecaprenyl phosphate + UDP. It functions in the pathway glycolipid biosynthesis; 4-amino-4-deoxy-alpha-L-arabinose undecaprenyl phosphate biosynthesis; 4-amino-4-deoxy-alpha-L-arabinose undecaprenyl phosphate from UDP-4-deoxy-4-formamido-beta-L-arabinose and undecaprenyl phosphate: step 1/2. The protein operates within bacterial outer membrane biogenesis; lipopolysaccharide biosynthesis. Its function is as follows. Catalyzes the transfer of 4-deoxy-4-formamido-L-arabinose from UDP to undecaprenyl phosphate. The modified arabinose is attached to lipid A and is required for resistance to polymyxin and cationic antimicrobial peptides. The sequence is that of Undecaprenyl-phosphate 4-deoxy-4-formamido-L-arabinose transferase from Escherichia coli O7:K1 (strain IAI39 / ExPEC).